We begin with the raw amino-acid sequence, 462 residues long: Fumarate hydratase class II (462 aa).

Substrate is bound by residues 97-99 (SGT), 127-130 (HPND), 137-139 (SSN), and Thr-185. The Proton donor/acceptor role is filled by His-186. The active site involves Ser-316. Substrate-binding positions include Ser-317 and 322–324 (KVN).

This sequence belongs to the class-II fumarase/aspartase family. Fumarase subfamily. Homotetramer.

The protein localises to the cytoplasm. The catalysed reaction is (S)-malate = fumarate + H2O. The protein operates within carbohydrate metabolism; tricarboxylic acid cycle; (S)-malate from fumarate: step 1/1. Functionally, involved in the TCA cycle. Catalyzes the stereospecific interconversion of fumarate to L-malate. In Bacillus cereus (strain ATCC 14579 / DSM 31 / CCUG 7414 / JCM 2152 / NBRC 15305 / NCIMB 9373 / NCTC 2599 / NRRL B-3711), this protein is Fumarate hydratase class II.